Here is a 156-residue protein sequence, read N- to C-terminus: Small ribosomal subunit protein uS7 (156 aa).

This sequence belongs to the universal ribosomal protein uS7 family. Part of the 30S ribosomal subunit. Contacts proteins S9 and S11.

One of the primary rRNA binding proteins, it binds directly to 16S rRNA where it nucleates assembly of the head domain of the 30S subunit. Is located at the subunit interface close to the decoding center, probably blocks exit of the E-site tRNA. The polypeptide is Small ribosomal subunit protein uS7 (Colwellia psychrerythraea (strain 34H / ATCC BAA-681) (Vibrio psychroerythus)).